The sequence spans 132 residues: Fluoride-specific ion channel FluC 3 (132 aa).

The next 4 helical transmembrane spans lie at 4–24 (ILLVGIGGFIGATLRYVFGGW), 32–52 (FPVGTLTINTIGSFFLGLIMY), 66–86 (IFLTIGILGAFTTLSTFGYES), and 95–115 (LMLMSINVVSTVLFSMMAVYL). The Na(+) site is built by Gly74 and Thr77.

This sequence belongs to the fluoride channel Fluc/FEX (TC 1.A.43) family.

The protein resides in the cell membrane. The catalysed reaction is fluoride(in) = fluoride(out). Its activity is regulated as follows. Na(+) is not transported, but it plays an essential structural role and its presence is essential for fluoride channel function. In terms of biological role, fluoride-specific ion channel. Important for reducing fluoride concentration in the cell, thus reducing its toxicity. The sequence is that of Fluoride-specific ion channel FluC 3 from Methanosarcina barkeri (strain Fusaro / DSM 804).